The primary structure comprises 735 residues: Glutamine-dependent NAD(+) synthetase (735 aa).

In terms of domain architecture, CN hydrolase spans 4–274 (LRVATCNLNQ…VEVLDALVDL (271 aa)). The active-site Proton acceptor; for glutaminase activity is Glu44. Lys113 serves as the catalytic For glutaminase activity. Catalysis depends on Cys174, which acts as the Nucleophile; for glutaminase activity. The segment at 324-711 (YHRPEEEIAF…STEGELRRRK (388 aa)) is ligase. Position 354 to 361 (354 to 361 (PLSGGADS)) interacts with ATP. Residue Ser356 is part of the active site.

This sequence in the C-terminal section; belongs to the NAD synthetase family.

The enzyme catalyses deamido-NAD(+) + L-glutamine + ATP + H2O = L-glutamate + AMP + diphosphate + NAD(+) + H(+). Its pathway is cofactor biosynthesis; NAD(+) biosynthesis; NAD(+) from deamido-NAD(+) (L-Gln route): step 1/1. The sequence is that of Glutamine-dependent NAD(+) synthetase from Oryza sativa subsp. indica (Rice).